We begin with the raw amino-acid sequence, 461 residues long: ATP-dependent protease ATPase subunit HslU (461 aa).

ATP contacts are provided by residues Ile18 and 60–65; that span reads GVGKTE. Residues 157–178 form a disordered region; it reads EGSSVKPEPTAQQKESRQKMRK. 3 residues coordinate ATP: Asp273, Glu339, and Arg411.

It belongs to the ClpX chaperone family. HslU subfamily. As to quaternary structure, a double ring-shaped homohexamer of HslV is capped on each side by a ring-shaped HslU homohexamer. The assembly of the HslU/HslV complex is dependent on binding of ATP.

It is found in the cytoplasm. In terms of biological role, ATPase subunit of a proteasome-like degradation complex; this subunit has chaperone activity. The binding of ATP and its subsequent hydrolysis by HslU are essential for unfolding of protein substrates subsequently hydrolyzed by HslV. HslU recognizes the N-terminal part of its protein substrates and unfolds these before they are guided to HslV for hydrolysis. This is ATP-dependent protease ATPase subunit HslU from Magnetococcus marinus (strain ATCC BAA-1437 / JCM 17883 / MC-1).